The primary structure comprises 285 residues: AT-hook motif nuclear-localized protein 21 (285 aa).

The interval aspartate 17 to valine 95 is disordered. Positions asparagine 39–histidine 50 are enriched in basic residues. Residues glycine 63–glycine 73 are compositionally biased toward gly residues. Residues arginine 78 to lysine 90 constitute a DNA-binding region (a.T hook). The 137-residue stretch at alanine 102–glycine 238 folds into the PPC domain.

Preferentially expressed in roots, but also in flowers and leaves. Detected in the inflorescence meristem, floral primordia and developing reproductive organs.

The protein resides in the nucleus. The protein localises to the nucleoplasm. Transcription factor that specifically binds AT-rich DNA sequences related to the nuclear matrix attachment regions (MARs). Binds to the MARs present in the ETTIN (ETT) promoter leading to a negative regulation of its gene expression. Functions as a molecular node downstream of the homeotic protein AGAMOUS (AG), regulating patterning and differentiation of reproductive organs. Acts as a chromatin remodeling factor that modifies the architecture of ETTIN (ETT) chromatin by modulating H3 methylation leading to the regulation of ETT expression. Seems to be involved in the regulation of a set of reproductives genes including CRABS CLAW (CRC), JAGGED (JAG) and KNUCKLES (KNU). This is AT-hook motif nuclear-localized protein 21 from Arabidopsis thaliana (Mouse-ear cress).